The following is a 372-amino-acid chain: ATP phosphoribosyltransferase regulatory subunit (372 aa).

The protein belongs to the class-II aminoacyl-tRNA synthetase family. HisZ subfamily. In terms of assembly, heteromultimer composed of HisG and HisZ subunits.

The protein localises to the cytoplasm. It participates in amino-acid biosynthesis; L-histidine biosynthesis; L-histidine from 5-phospho-alpha-D-ribose 1-diphosphate: step 1/9. Functionally, required for the first step of histidine biosynthesis. May allow the feedback regulation of ATP phosphoribosyltransferase activity by histidine. The sequence is that of ATP phosphoribosyltransferase regulatory subunit from Allorhizobium ampelinum (strain ATCC BAA-846 / DSM 112012 / S4) (Agrobacterium vitis (strain S4)).